Here is a 710-residue protein sequence, read N- to C-terminus: Amyloid beta precursor protein binding family B member 1 (710 aa).

Position 135 is a phosphoserine (S135). Disordered regions lie at residues 143 to 256 and 276 to 300; these read EQGP…SDLP and GTTQ…ESQL. Residues 145 to 173 show a composition bias toward acidic residues; sequence GPDEGEEKAAGEAEEDDEDEEEEEEEEDL. N6-acetyllysine is present on K204. Residues 223–234 are compositionally biased toward polar residues; it reads SWATLSQGSPSY. The 33-residue stretch at 253–285 folds into the WW domain; that stretch reads SDLPAGWMRVQDTSGTYYWHIPTGTTQWEPPGR. The segment covering 287 to 299 has biased composition (low complexity); the sequence is SPSQGSSPQEESQ. Residues 370-509 form the PID 1 domain; that stretch reads FAVRSLGWVE…SKIMSERRNA (140 aa). A Phosphoserine; by PKC modification is found at S459. S517 carries the post-translational modification Phosphoserine. The region spanning 542–699 is the PID 2 domain; the sequence is KFQVYYLGNV…RRGVQSLWGS (158 aa). Residue Y547 is modified to Phosphotyrosine; by ABL1. A Phosphoserine; by SGK1 modification is found at S610. Residue K701 is modified to N6-acetyllysine.

In terms of assembly, component of a complex, at least composed of APBB1, RASD1/DEXRAS1 and APP. Interacts (via PID domain 2) with APP (with the intracellular domain of the amyloid-beta precursor protein). Interacts (via PID domain 2) with RASD1/DEXRAS1; impairs the transcription activation activity. Interacts (via PID domain 1) with KAT5/TIP60. Interacts (via the WW domain) with the proline-rich region of APBB1IP. Interacts with TSHZ1 and TSHZ2. Interacts (via the WW domain) with histone H2AX (when phosphorylated on 'Tyr-142') and the proline-rich region of ENAH. Interacts with MAPK8. Interacts (via PID domain 1) with TSHZ3 (via homeobox domain). Interacts with SET. Found in a trimeric complex with HDAC1 and TSHZ3; the interaction between HDAC1 and APBB1 is mediated by TSHZ3. Interacts (via WWW domain) with NEK6. Interacts (via WWW domain) with ABL1. Interacts with RNF157. Interacts with ARF6. In terms of processing, polyubiquitination by RNF157 leads to degradation by the proteasome. Phosphorylation at Ser-610 by SGK1 promotes its localization to the nucleus. Phosphorylated following nuclear translocation. Phosphorylation at Tyr-546 by ABL1 enhances transcriptional activation activity and reduces the affinity for RASD1/DEXRAS1. Post-translationally, acetylation at Lys-204 and Lys-701 by KAT5 promotes its transcription activator activity. Phosphorylated at Ser-459 by PKC upon insulin activation. As to expression, expressed in the brain, retinal lens and muscle cells (at protein level).

It is found in the cell membrane. The protein resides in the cytoplasm. Its subcellular location is the nucleus. It localises to the cell projection. The protein localises to the growth cone. It is found in the nucleus speckle. In terms of biological role, transcription coregulator that can have both coactivator and corepressor functions. Adapter protein that forms a transcriptionally active complex with the gamma-secretase-derived amyloid precursor protein (APP) intracellular domain. Plays a central role in the response to DNA damage by translocating to the nucleus and inducing apoptosis. May act by specifically recognizing and binding histone H2AX phosphorylated on 'Tyr-142' (H2AXY142ph) at double-strand breaks (DSBs), recruiting other pro-apoptosis factors such as MAPK8/JNK1. Required for histone H4 acetylation at double-strand breaks (DSBs). Its ability to specifically bind modified histones and chromatin modifying enzymes such as KAT5/TIP60, probably explains its transcription activation activity. Functions in association with TSHZ3, SET and HDAC factors as a transcriptional repressor, that inhibits the expression of CASP4. Associates with chromatin in a region surrounding the CASP4 transcriptional start site(s). Involved in hippocampal neurite branching and neuromuscular junction formation, as a result plays a role in spatial memory functioning. Plays a role in the maintenance of lens transparency. May play a role in muscle cell strength. Acts as a molecular adapter that functions in neurite outgrowth by activating the RAC1-ARF6 axis upon insulin treatment. This Mus musculus (Mouse) protein is Amyloid beta precursor protein binding family B member 1.